The sequence spans 271 residues: Ribosomal RNA small subunit methyltransferase A (271 aa).

6 residues coordinate S-adenosyl-L-methionine: His-11, Leu-13, Gly-38, Glu-58, Asp-86, and Asn-101.

This sequence belongs to the class I-like SAM-binding methyltransferase superfamily. rRNA adenine N(6)-methyltransferase family. RsmA subfamily.

It localises to the cytoplasm. The enzyme catalyses adenosine(1518)/adenosine(1519) in 16S rRNA + 4 S-adenosyl-L-methionine = N(6)-dimethyladenosine(1518)/N(6)-dimethyladenosine(1519) in 16S rRNA + 4 S-adenosyl-L-homocysteine + 4 H(+). Its function is as follows. Specifically dimethylates two adjacent adenosines (A1518 and A1519) in the loop of a conserved hairpin near the 3'-end of 16S rRNA in the 30S particle. May play a critical role in biogenesis of 30S subunits. The sequence is that of Ribosomal RNA small subunit methyltransferase A from Helicobacter pylori (strain ATCC 700392 / 26695) (Campylobacter pylori).